The sequence spans 186 residues: Ribosome-recycling factor (186 aa).

The protein belongs to the RRF family.

The protein localises to the cytoplasm. In terms of biological role, responsible for the release of ribosomes from messenger RNA at the termination of protein biosynthesis. May increase the efficiency of translation by recycling ribosomes from one round of translation to another. This is Ribosome-recycling factor from Limosilactobacillus reuteri (Lactobacillus reuteri).